We begin with the raw amino-acid sequence, 316 residues long: 4-hydroxy-3-methylbut-2-enyl diphosphate reductase (316 aa).

Cys12 lines the [4Fe-4S] cluster pocket. (2E)-4-hydroxy-3-methylbut-2-enyl diphosphate is bound by residues His41 and His74. Residues His41 and His74 each contribute to the dimethylallyl diphosphate site. Isopentenyl diphosphate-binding residues include His41 and His74. [4Fe-4S] cluster is bound at residue Cys96. Residue His124 participates in (2E)-4-hydroxy-3-methylbut-2-enyl diphosphate binding. His124 is a dimethylallyl diphosphate binding site. Residue His124 coordinates isopentenyl diphosphate. Residue Glu126 is the Proton donor of the active site. Thr165 provides a ligand contact to (2E)-4-hydroxy-3-methylbut-2-enyl diphosphate. Cys195 lines the [4Fe-4S] cluster pocket. (2E)-4-hydroxy-3-methylbut-2-enyl diphosphate is bound by residues Ser223, Ser224, Asn225, and Ser267. The dimethylallyl diphosphate site is built by Ser223, Ser224, Asn225, and Ser267. Residues Ser223, Ser224, Asn225, and Ser267 each coordinate isopentenyl diphosphate.

This sequence belongs to the IspH family. Requires [4Fe-4S] cluster as cofactor.

The catalysed reaction is isopentenyl diphosphate + 2 oxidized [2Fe-2S]-[ferredoxin] + H2O = (2E)-4-hydroxy-3-methylbut-2-enyl diphosphate + 2 reduced [2Fe-2S]-[ferredoxin] + 2 H(+). It carries out the reaction dimethylallyl diphosphate + 2 oxidized [2Fe-2S]-[ferredoxin] + H2O = (2E)-4-hydroxy-3-methylbut-2-enyl diphosphate + 2 reduced [2Fe-2S]-[ferredoxin] + 2 H(+). It participates in isoprenoid biosynthesis; dimethylallyl diphosphate biosynthesis; dimethylallyl diphosphate from (2E)-4-hydroxy-3-methylbutenyl diphosphate: step 1/1. Its pathway is isoprenoid biosynthesis; isopentenyl diphosphate biosynthesis via DXP pathway; isopentenyl diphosphate from 1-deoxy-D-xylulose 5-phosphate: step 6/6. Its function is as follows. Catalyzes the conversion of 1-hydroxy-2-methyl-2-(E)-butenyl 4-diphosphate (HMBPP) into a mixture of isopentenyl diphosphate (IPP) and dimethylallyl diphosphate (DMAPP). Acts in the terminal step of the DOXP/MEP pathway for isoprenoid precursor biosynthesis. The polypeptide is 4-hydroxy-3-methylbut-2-enyl diphosphate reductase (Acidithiobacillus ferrooxidans (strain ATCC 53993 / BNL-5-31) (Leptospirillum ferrooxidans (ATCC 53993))).